Consider the following 412-residue polypeptide: Protein trichome birefringence-like 13 (412 aa).

The chain crosses the membrane as a helical; Signal-anchor for type II membrane protein span at residues 9–29; the sequence is PSLFPLLSLLCFISIFLLLSL. Residues 137 to 139 carry the GDS motif motif; the sequence is GDS. A DCXHWCLPGXXDXWN motif motif is present at residues 385-399; that stretch reads DCMHWCLPGLTDTWN.

Belongs to the PC-esterase family. TBL subfamily.

Its subcellular location is the membrane. Functionally, may act as a bridging protein that binds pectin and other cell wall polysaccharides. Probably involved in maintaining esterification of pectins. May be involved in the specific O-acetylation of cell wall polymers. The chain is Protein trichome birefringence-like 13 (TBL13) from Arabidopsis thaliana (Mouse-ear cress).